The sequence spans 368 residues: Histidinol-phosphate aminotransferase (368 aa).

N6-(pyridoxal phosphate)lysine is present on lysine 223.

The protein belongs to the class-II pyridoxal-phosphate-dependent aminotransferase family. Histidinol-phosphate aminotransferase subfamily. In terms of assembly, homodimer. Requires pyridoxal 5'-phosphate as cofactor.

The enzyme catalyses L-histidinol phosphate + 2-oxoglutarate = 3-(imidazol-4-yl)-2-oxopropyl phosphate + L-glutamate. It participates in amino-acid biosynthesis; L-histidine biosynthesis; L-histidine from 5-phospho-alpha-D-ribose 1-diphosphate: step 7/9. This chain is Histidinol-phosphate aminotransferase, found in Rhodospirillum rubrum (strain ATCC 11170 / ATH 1.1.1 / DSM 467 / LMG 4362 / NCIMB 8255 / S1).